The following is a 230-amino-acid chain: Transmembrane protein 221 (230 aa).

4 consecutive transmembrane segments (helical) span residues 12 to 32 (AMTL…QLLF), 73 to 93 (ALAA…ALCG), 125 to 145 (LFCC…LLLF), and 147 to 167 (IEAG…LVAI). A disordered region spans residues 184–230 (RELSPPSFEDEPARPSEDSKSGCRAQPPQDEETETPIGAVTHQGSHF). Residues 194–204 (EPARPSEDSKS) show a composition bias toward basic and acidic residues.

It localises to the membrane. The polypeptide is Transmembrane protein 221 (Tmem221) (Mus musculus (Mouse)).